We begin with the raw amino-acid sequence, 1502 residues long: MLEINDFSAIRISLASPEDILSWSHGEVTKPETINYRTLKPERDGLFCERIFGPTKDWECYCGKYKRVRYKGVVCDKCGVEVTRSKVRRERMGHISLASPVSHIWFVKGTPSRLGLLLDISPRNLERVLYFASYIIVHVDEEVKAHRREALQAEYREKRERIQAEAESRQIELSTQLTQDLGGMESAQLSTQRRIEEEYRRLRDEISAEAERLRTDLEEKQGEAAEEDIIFRGTVLVEEGESITEKTLDALDELLDQELETLEQRKQRDLEDAEQLTGAERERKEYEASQERERLQERLQSELDRLVREEKERLEQLDSIKLKRILNEQEYRALREIAPGAFRADMGAGAIRDLIVRTVDLDKLAEELQNEVYTTQGQRRKKATKRLRVVEAFRKSGNRPEWMILTVLPVIPPDLRPMVQLDGGRFATSDLNDLYRRVINRNNRLKRLMELNAPEIIVRNEKRMLQEAVDALIDNGRRGRAVSGKGKHRLKSLSDMLKGKQGRFRQNLLGKRVDYSGRSVIVVGPDLKLHQCGLPKKMALELFKPFVMRRLVEKGAAHNIKSAKRIVERVRPEVWDVLEEVIKDYLVLLNRAPSLHRLSIQAFEAKLIEGSAIQLHPLVCAAFNADFDGDQMAVHVPLSRKAQEEARMRMLSKYNLLSPATGDPIITPSQDIVLGCYYLTMVRDGAKGSGKMFASIDEALLAYDKGLVDIQAPIFVRMTGTLHGESDRPVRILNSDENGAPRMLLETTIGRIIFNNELLEPLRFRNRLIAKKGLREIIADCYKYYTNLNNLTEADLDTIRTMYGDRPRDDLARYFGSEMTASQADRIKTLGFKYATRGGMTIGVDDIEIPPKKQEILAEAEKRVAEVERQFRRGLITEEERYREIVEIWQNATKQTTEAVKQYLNPFGPVAMMVNSAARGNINQLSQMAGMRGLMSDPTGRIIELPIKSNFREGLSVLEYFVSTHGGRKGLADTALRTADAGYLTRRLIDVAQDNIVTIDDCGTDEGLWIYRSDDREVLQDFEQRILGRLLAAPLVDPRTGEVLADRNAEIDEALTRRCKELGIDAVYVRSPLACKADYGICRMCYGRNLATGKLVDIGEAVGIIAAQSIGEPGTQLTLRTFHTGGVASADDITQGLPRVQEIFEARTPKGKAILAEIDGIVELVREDEVRKIRVVSTDLYTDDHVLPPHYEPVVADGAQVNEGDVLAQSNRADLDSEPIVARLAGVVRIGAGQISVINEEREVREVIAPHTARLAAGIENGARVVAGQHLTEGSADPQELLALQGREAVQRYLVNEAQKVYRSQGVDINDKHIEVIVRQMLRRVRIEEPGDTDYLPGELIDSTEFVRRNAEIISQGGEPATASTMLLGITKASLTTDSFLAAASFQETTRVLTEAAITGKVDYLRGLKENVVIGKLIPAGTGIEKRRQLAEEVIGELANVVPTSTAVVEQERPEREADEALRRRLRALIGSDDNGDEVGKNGEFADETPFTGDSDDRDNEI.

C60, C62, C75, and C78 together coordinate Zn(2+). Positions 265 to 293 are disordered; the sequence is RKQRDLEDAEQLTGAERERKEYEASQERE. Residues 279-293 are compositionally biased toward basic and acidic residues; that stretch reads AERERKEYEASQERE. Residues D626, D628, and D630 each contribute to the Mg(2+) site. Zn(2+)-binding residues include C1002, C1075, C1082, and C1085. The segment at 1472–1502 is disordered; it reads SDDNGDEVGKNGEFADETPFTGDSDDRDNEI.

It belongs to the RNA polymerase beta' chain family. The RNAP catalytic core consists of 2 alpha, 1 beta, 1 beta' and 1 omega subunit. When a sigma factor is associated with the core the holoenzyme is formed, which can initiate transcription. The cofactor is Mg(2+). Zn(2+) serves as cofactor.

It carries out the reaction RNA(n) + a ribonucleoside 5'-triphosphate = RNA(n+1) + diphosphate. Its function is as follows. DNA-dependent RNA polymerase catalyzes the transcription of DNA into RNA using the four ribonucleoside triphosphates as substrates. The sequence is that of DNA-directed RNA polymerase subunit beta' from Roseiflexus castenholzii (strain DSM 13941 / HLO8).